A 469-amino-acid polypeptide reads, in one-letter code: Probable Xaa-Pro aminopeptidase PEPP (469 aa).

Aspartate 257, aspartate 268, glutamate 391, and glutamate 436 together coordinate Mn(2+).

It belongs to the peptidase M24B family. Mn(2+) is required as a cofactor.

It carries out the reaction Release of any N-terminal amino acid, including proline, that is linked to proline, even from a dipeptide or tripeptide.. Functionally, catalyzes the removal of a penultimate prolyl residue from the N-termini of peptides. This chain is Probable Xaa-Pro aminopeptidase PEPP (PEPP), found in Fusarium vanettenii (strain ATCC MYA-4622 / CBS 123669 / FGSC 9596 / NRRL 45880 / 77-13-4) (Fusarium solani subsp. pisi).